A 196-amino-acid polypeptide reads, in one-letter code: Dephospho-CoA kinase (196 aa).

Positions 6–196 constitute a DPCK domain; the sequence is AIALTGGIGT…QVERFLKTLL (191 aa). 14 to 19 provides a ligand contact to ATP; that stretch reads GTGKST.

It belongs to the CoaE family.

It is found in the cytoplasm. The catalysed reaction is 3'-dephospho-CoA + ATP = ADP + CoA + H(+). It participates in cofactor biosynthesis; coenzyme A biosynthesis; CoA from (R)-pantothenate: step 5/5. Catalyzes the phosphorylation of the 3'-hydroxyl group of dephosphocoenzyme A to form coenzyme A. In Helicobacter pylori (strain J99 / ATCC 700824) (Campylobacter pylori J99), this protein is Dephospho-CoA kinase.